Reading from the N-terminus, the 208-residue chain is Dual specificity protein phosphatase 22-A (208 aa).

The Tyrosine-protein phosphatase domain occupies 4–144 (GMNKVIDGLY…LQEFQMKQVS (141 aa)). Catalysis depends on Cys88, which acts as the Phosphocysteine intermediate.

This sequence belongs to the protein-tyrosine phosphatase family. Non-receptor class dual specificity subfamily.

Its subcellular location is the cytoplasm. It is found in the nucleus. It catalyses the reaction O-phospho-L-tyrosyl-[protein] + H2O = L-tyrosyl-[protein] + phosphate. The enzyme catalyses O-phospho-L-seryl-[protein] + H2O = L-seryl-[protein] + phosphate. The catalysed reaction is O-phospho-L-threonyl-[protein] + H2O = L-threonyl-[protein] + phosphate. In terms of biological role, activates the Jnk signaling pathway. Dephosphorylates and deactivates p38 and stress-activated protein kinase/c-Jun N-terminal kinase (SAPK/JNK). This chain is Dual specificity protein phosphatase 22-A, found in Danio rerio (Zebrafish).